The chain runs to 614 residues: MIKKASLLTACSVTAFSAWAQDTSPDTLVVTANRFEQPRSTVLAPTTVVTRQDIDRWQSTSVNDVLRRLPGVDITQNGGSGQLSSIFIRGTNASHVLVLIDGVRLNLAGVSGSADLSQFPIALVQRVEYIRGPRSAVYGSDAIGGVVNIITTRDEPGTEISAGWGSNSYQNYDVSTQQQLGDKTRVTLLGDYAHTHGYDVVAYGNTGTQAQTDNDGFLSKTLYGALEHNFTDAWSGFVRGYGYDNRTNYDAYYSPGSPLLDTRKLYSQSWDAGLRYNGELIKSQLITSYSHSKDYNYDPHYGRYDSSATLDEMKQYTVQWANNVIVGHGSIGAGVDWQKQTTTPGTGYVEDGYDQRNTGIYLTGLQQVGDFTFEGAARSDDNSQFGRHGTWQTSAGWEFIEGYRFIASYGTSYKAPNLGQLYGFYGNPNLDPEKSKQWEGAFEGLTAGVNWRISGYRNDVSDLIDYDDHTLKYYNEGKARIKGVEATANFDTGPLTHTVSYDYVDARNAITDTPLLRRAKQQVKYQLDWQLYDFDWGITYQYLGTRYDKDYSSYPYQTVKMGGVSLWDLAVAYPVTSHLTVRGKIANLFDKDYETVYGYQTAGREYTLSGSYTF.

The signal sequence occupies residues 1 to 20 (MIKKASLLTACSVTAFSAWA). Residues 21-157 (QDTSPDTLVV…NIITTRDEPG (137 aa)) lie on the Periplasmic side of the membrane. A TonB box motif is present at residues 26–33 (DTLVVTAN). The TBDR plug domain maps to 38-152 (PRSTVLAPTT…IGGVVNIITT (115 aa)). Cyanocob(III)alamin is bound by residues Leu-83, Ser-85, Asn-92, and 110-111 (VS). In terms of domain architecture, TBDR beta-barrel spans 155–614 (EPGTEISAGW…EYTLSGSYTF (460 aa)). The beta stranded transmembrane segment at 158 to 165 (TEISAGWG) threads the bilayer. Over 166–168 (SNS) the chain is Extracellular. A beta stranded transmembrane segment spans residues 169–178 (YQNYDVSTQQ). Residues 179 to 183 (QLGDK) lie on the Periplasmic side of the membrane. Residues 184 to 195 (TRVTLLGDYAHT) form a beta stranded membrane-spanning segment. The Extracellular segment spans residues 196–216 (HGYDVVAYGNTGTQAQTDNDG). 4 residues coordinate Ca(2+): Asp-199, Gln-211, Asp-213, and Asp-215. Residues 217–227 (FLSKTLYGALE) traverse the membrane as a beta stranded segment. Residues 228-231 (HNFT) are Periplasmic-facing. The chain crosses the membrane as a beta stranded span at residues 232–248 (DAWSGFVRGYGYDNRTN). Positions 249 and 250 each coordinate Ca(2+). Residues 249 to 262 (YDAYYSPGSPLLDT) are Extracellular-facing. Position 251 (Ala-251) interacts with cyanocob(III)alamin. Ca(2+) is bound at residue Asp-261. A beta stranded transmembrane segment spans residues 263–277 (RKLYSQSWDAGLRYN). A topological domain (periplasmic) is located at residue Gly-278. The beta stranded transmembrane segment at 279–296 (ELIKSQLITSYSHSKDYN) threads the bilayer. Topologically, residues 297-308 (YDPHYGRYDSSA) are extracellular. Thr-309 serves as a coordination point for cyanocob(III)alamin. Residues 309 to 325 (TLDEMKQYTVQWANNVI) form a beta stranded membrane-spanning segment. The Periplasmic segment spans residues 326 to 327 (VG). The chain crosses the membrane as a beta stranded span at residues 328–337 (HGSIGAGVDW). The Extracellular segment spans residues 338–352 (QKQTTTPGTGYVEDG). The chain crosses the membrane as a beta stranded span at residues 353-369 (YDQRNTGIYLTGLQQVG). Residue Asp-370 is a topological domain, periplasmic. The beta stranded transmembrane segment at 371–381 (FTFEGAARSDD) threads the bilayer. Residues 382–384 (NSQ) are Extracellular-facing. The beta stranded transmembrane segment at 385–400 (FGRHGTWQTSAGWEFI) threads the bilayer. Over 401 to 402 (EG) the chain is Periplasmic. Residues 403 to 417 (YRFIASYGTSYKAPN) traverse the membrane as a beta stranded segment. At 418-433 (LGQLYGFYGNPNLDPE) the chain is on the extracellular side. The beta stranded transmembrane segment at 434–443 (KSKQWEGAFE) threads the bilayer. Topologically, residues 444-448 (GLTAG) are periplasmic. A beta stranded membrane pass occupies residues 449-458 (VNWRISGYRN). Residues 459–472 (DVSDLIDYDDHTLK) are Extracellular-facing. A beta stranded transmembrane segment spans residues 473 to 490 (YYNEGKARIKGVEATANF). The Periplasmic portion of the chain corresponds to 491–493 (DTG). Residues 494-509 (PLTHTVSYDYVDARNA) traverse the membrane as a beta stranded segment. Residues 510-516 (ITDTPLL) lie on the Extracellular side of the membrane. Cyanocob(III)alamin is bound at residue Arg-517. The beta stranded transmembrane segment at 517 to 529 (RRAKQQVKYQLDW) threads the bilayer. Residues 530–534 (QLYDF) lie on the Periplasmic side of the membrane. The chain crosses the membrane as a beta stranded span at residues 535-550 (DWGITYQYLGTRYDKD). Cyanocob(III)alamin is bound at residue Tyr-551. Residues 551–557 (YSSYPYQ) lie on the Extracellular side of the membrane. Residues 558–572 (TVKMGGVSLWDLAVA) form a beta stranded membrane-spanning segment. The Periplasmic portion of the chain corresponds to 573–584 (YPVTSHLTVRGK). The chain crosses the membrane as a beta stranded span at residues 585–596 (IANLFDKDYETV). The Extracellular portion of the chain corresponds to 597-601 (YGYQT). The short motif at 597-614 (YGYQTAGREYTLSGSYTF) is the TonB C-terminal box element. Residues 602–614 (AGREYTLSGSYTF) form a beta stranded membrane-spanning segment.

It belongs to the TonB-dependent receptor family. BtuB (TC 1.B.14.3.1) subfamily. As to quaternary structure, interacts with TonB. In terms of assembly, (Microbial infection) The hairpin motif of the receptor-binding domain of colicin E3 (ColE3) interacts with BtuB without displacing BtuB's central plug. An N-terminal fragment of E3 binds OmpF; trimeric complexes with ColE3, BtuB and OmpF can be cross-linked and immunoprecipitated.

Its subcellular location is the cell outer membrane. With respect to regulation, calcium increases vitamin B12 binding affinity by a factor of 50-100. (Microbial infection) Colicins E1, E3 and K inhibit cyanocobalamin (CN-B12) uptake; E1 and E3 inhibit binding of CN-B12 to cells while colicin K inhibits a later, energy-dependent step of CN-B12. Its function is as follows. Involved in the active translocation of vitamin B12 (cyanocobalamin) across the outer membrane to the periplasmic space. It derives its energy for transport by interacting with the trans-periplasmic membrane protein TonB. In terms of biological role, (Microbial infection) Acts as a receptor for bacteriophages BF23 and C1, and for A and E colicins. Cyanocobalamin (CN-B12) in solid medium protects against colicins E1 and E3. Does not act as the translocon for colicin E3 (ColE3). The translocon is OmpF; trimeric complexes with ColE3, BtuB and OmpF can be cross-linked and immunoprecipitated. This is Vitamin B12 transporter BtuB from Escherichia coli (strain K12).